Reading from the N-terminus, the 389-residue chain is Carbamoyl phosphate synthase small chain (389 aa).

Positions 1–199 are CPSase; it reads MFNPAILVLA…AGKPFNLQTT (199 aa). Residues serine 50, glycine 251, and glycine 253 each contribute to the L-glutamine site. The 187-residue stretch at 203–389 folds into the Glutamine amidotransferase type-1 domain; sequence HVVAYDFGIK…FINAVQATKA (187 aa). The active-site Nucleophile is cysteine 279. L-glutamine-binding residues include leucine 280, glutamine 283, asparagine 321, glycine 323, and phenylalanine 324. Residues histidine 363 and glutamate 365 contribute to the active site.

The protein belongs to the CarA family. As to quaternary structure, composed of two chains; the small (or glutamine) chain promotes the hydrolysis of glutamine to ammonia, which is used by the large (or ammonia) chain to synthesize carbamoyl phosphate. Tetramer of heterodimers (alpha,beta)4.

It carries out the reaction hydrogencarbonate + L-glutamine + 2 ATP + H2O = carbamoyl phosphate + L-glutamate + 2 ADP + phosphate + 2 H(+). The enzyme catalyses L-glutamine + H2O = L-glutamate + NH4(+). It functions in the pathway amino-acid biosynthesis; L-arginine biosynthesis; carbamoyl phosphate from bicarbonate: step 1/1. Its pathway is pyrimidine metabolism; UMP biosynthesis via de novo pathway; (S)-dihydroorotate from bicarbonate: step 1/3. In terms of biological role, small subunit of the glutamine-dependent carbamoyl phosphate synthetase (CPSase). CPSase catalyzes the formation of carbamoyl phosphate from the ammonia moiety of glutamine, carbonate, and phosphate donated by ATP, constituting the first step of 2 biosynthetic pathways, one leading to arginine and/or urea and the other to pyrimidine nucleotides. The small subunit (glutamine amidotransferase) binds and cleaves glutamine to supply the large subunit with the substrate ammonia. The chain is Carbamoyl phosphate synthase small chain from Haemophilus ducreyi (strain 35000HP / ATCC 700724).